A 222-amino-acid chain; its full sequence is tRNA (guanine-N(1)-)-methyltransferase (222 aa).

S-adenosyl-L-methionine contacts are provided by residues glycine 110 and 130 to 135 (IGDYVL).

Belongs to the RNA methyltransferase TrmD family. In terms of assembly, homodimer.

It localises to the cytoplasm. The catalysed reaction is guanosine(37) in tRNA + S-adenosyl-L-methionine = N(1)-methylguanosine(37) in tRNA + S-adenosyl-L-homocysteine + H(+). In terms of biological role, specifically methylates guanosine-37 in various tRNAs. The polypeptide is tRNA (guanine-N(1)-)-methyltransferase (Protochlamydia amoebophila (strain UWE25)).